The following is a 529-amino-acid chain: Bifunctional purine biosynthesis protein PurH (529 aa).

The MGS-like domain maps to 1–148 (MNNARPIRRA…KNHKDTTIIV (148 aa)).

This sequence belongs to the PurH family.

The enzyme catalyses (6R)-10-formyltetrahydrofolate + 5-amino-1-(5-phospho-beta-D-ribosyl)imidazole-4-carboxamide = 5-formamido-1-(5-phospho-D-ribosyl)imidazole-4-carboxamide + (6S)-5,6,7,8-tetrahydrofolate. It carries out the reaction IMP + H2O = 5-formamido-1-(5-phospho-D-ribosyl)imidazole-4-carboxamide. The protein operates within purine metabolism; IMP biosynthesis via de novo pathway; 5-formamido-1-(5-phospho-D-ribosyl)imidazole-4-carboxamide from 5-amino-1-(5-phospho-D-ribosyl)imidazole-4-carboxamide (10-formyl THF route): step 1/1. It functions in the pathway purine metabolism; IMP biosynthesis via de novo pathway; IMP from 5-formamido-1-(5-phospho-D-ribosyl)imidazole-4-carboxamide: step 1/1. This Shewanella piezotolerans (strain WP3 / JCM 13877) protein is Bifunctional purine biosynthesis protein PurH.